The sequence spans 432 residues: MRVLVLGSGVVGTASAYYLARAGFEVVVVDRQPAVAMETSFANAGQVSPGYASPWAAPGVPLKAMKWLLQRHAPLAIKLTGDIDQYLWMAQMLRNCTAARYAVNKERMVRLSEYSRDCLDELRAETGIAYEGRQLGTTQLFRTQAQLDAAAKDIAVLERSGVPYELLDRASIARVEPALAKVSHKLSGALRLPNDQTGDCQLFTTRLAEMARALGVEFRFEQNIQRLEHAGDRIAGVWIDGKLETADRYVLALGSYSPQMLKPLGIRAPVYPLKGYSLTVPISDPAMAPQSTVLDETYKVAITRFDQRIRVGGMAEIAGHDLSLDPRRRETLEMVVGDLYPQGGDPSDAVFWTGLRPATPDGTPIIGATPYRNLFLNTGHGTLGWTMACGSGRVLADLLASKRPQISTEGLDIFRYGKHKENHKHAHPAAAH.

3–17 (VLVLGSGVVGTASAY) is an FAD binding site.

It belongs to the DadA oxidoreductase family. FAD serves as cofactor.

It catalyses the reaction a D-alpha-amino acid + A + H2O = a 2-oxocarboxylate + AH2 + NH4(+). It participates in amino-acid degradation; D-alanine degradation; NH(3) and pyruvate from D-alanine: step 1/1. Its function is as follows. Oxidative deamination of D-amino acids. The protein is D-amino acid dehydrogenase of Stutzerimonas stutzeri (strain A1501) (Pseudomonas stutzeri).